A 377-amino-acid chain; its full sequence is Alkane 1-monooxygenase 2 (377 aa).

The next 4 helical transmembrane spans lie at 17 to 37, 43 to 63, 87 to 107, and 116 to 136; these read GYWI…WSLG, AWPW…DAIV, VLSL…GWIL, and VGQL…GITV. The Fe cation site is built by His-138, His-142, His-168, His-172, and His-173. Residues 236–256 form a helical membrane-spanning segment; that stretch reads ALFLLGFSLAFGWLGAIFFLG. Fe cation-binding residues include His-312, His-315, and His-316.

Belongs to the fatty acid desaturase type 1 family. AlkB subfamily. Requires Fe(3+) as cofactor.

The protein localises to the cell inner membrane. It carries out the reaction octane + 2 reduced [rubredoxin] + O2 + 2 H(+) = 2 oxidized [rubredoxin] + octan-1-ol + H2O. Its pathway is hydrocarbon metabolism; alkane degradation. In terms of biological role, catalyzes the hydroxylation of n-alkanes in the presence of a NADH-rubredoxin reductase and rubredoxin. It preferably hydroxylases C12-C20 hydrocarbons. The chain is Alkane 1-monooxygenase 2 (alkB2) from Pseudomonas aeruginosa (strain ATCC 15692 / DSM 22644 / CIP 104116 / JCM 14847 / LMG 12228 / 1C / PRS 101 / PAO1).